A 1470-amino-acid chain; its full sequence is Guanine nucleotide exchange factor subunit R06F6.8 (1470 aa).

3 WD repeats span residues 20–58, 68–107, and 472–512; these read STAA…LLCS, ETRG…DEQC, and AYCS…VVGV. 4 disordered regions span residues 673–710, 975–1001, 1017–1045, and 1238–1259; these read QSQN…PMNQ, FFRT…ADSS, RLNK…SKDK, and RSPS…SPSS. Low complexity predominate over residues 689–707; sequence SNVSIQSVSTSTTSEPSSP. Residues 983–1001 show a composition bias toward polar residues; that stretch reads AKTSLSRRPTVSSPSADSS. Residues 1028-1045 show a composition bias toward basic and acidic residues; that stretch reads EQKDAPRKDSIGGSSKDK. A helical membrane pass occupies residues 1294–1314; sequence LLLSLFSQTATIDWIFLFCLL. Residues 1385–1403 are compositionally biased toward basic and acidic residues; sequence SPDNENRKASQKTSADDPK. The segment at 1385–1447 is disordered; it reads SPDNENRKAS…SADRAHKSVK (63 aa). Polar residues predominate over residues 1411–1424; that stretch reads SGSSKLNNSFSNPK. Over residues 1431–1447 the composition is skewed to basic and acidic residues; it reads GRRERSRSADRAHKSVK.

It belongs to the RIC1 family. In terms of assembly, component of a guanine nucleotide exchange factor (GEF) complex.

It localises to the membrane. Probable component of a guanine nucleotide exchange factor (GEF) that may be required for efficient fusion of endosome-derived vesicles with the Golgi. The sequence is that of Guanine nucleotide exchange factor subunit R06F6.8 from Caenorhabditis elegans.